The following is a 410-amino-acid chain: Testis-specific Y-encoded-like protein 6 (410 aa).

2 disordered regions span residues 1–31 (MSLPESPHSPATLDYALEDPHQGQRSREKSK) and 46–69 (PIVFPPPRLPEEGVAPQDPADGGH). Residue Ser9 is modified to Phosphoserine. Positions 18 to 31 (EDPHQGQRSREKSK) are enriched in basic and acidic residues.

This sequence belongs to the nucleosome assembly protein (NAP) family.

This chain is Testis-specific Y-encoded-like protein 6 (TSPYL6), found in Homo sapiens (Human).